Consider the following 152-residue polypeptide: Arginine repressor (152 aa).

It belongs to the ArgR family.

The protein localises to the cytoplasm. The protein operates within amino-acid biosynthesis; L-arginine biosynthesis [regulation]. Its function is as follows. Regulates arginine biosynthesis genes. In Lactiplantibacillus plantarum (strain ATCC BAA-793 / NCIMB 8826 / WCFS1) (Lactobacillus plantarum), this protein is Arginine repressor.